Reading from the N-terminus, the 419-residue chain is Histidine--tRNA ligase (419 aa).

Belongs to the class-II aminoacyl-tRNA synthetase family. As to quaternary structure, homodimer.

The protein localises to the cytoplasm. It carries out the reaction tRNA(His) + L-histidine + ATP = L-histidyl-tRNA(His) + AMP + diphosphate + H(+). The protein is Histidine--tRNA ligase of Methylobacillus flagellatus (strain ATCC 51484 / DSM 6875 / VKM B-1610 / KT).